The primary structure comprises 273 residues: Oxidized low-density lipoprotein receptor 1 (273 aa).

Residues Met-1–Lys-22 are disordered. The Cytoplasmic portion of the chain corresponds to Met-1 to Cys-36. Residues Cys-36 and Cys-46 are each lipidated (S-palmitoyl cysteine). The helical; Signal-anchor for type II membrane protein transmembrane segment at Leu-37 to Gly-57 threads the bilayer. The interval Met-58 to Trp-150 is neck. Topologically, residues Met-58–Gln-273 are extracellular. Positions Ser-64–Leu-123 form a coiled coil. N-linked (GlcNAc...) asparagine glycosylation occurs at Asn-73. Asn-139 carries N-linked (GlcNAc...) (complex) asparagine glycosylation. 3 disulfides stabilise this stretch: Cys-144-Cys-155, Cys-172-Cys-264, and Cys-243-Cys-256. Residues His-151 to Gln-265 enclose the C-type lectin domain.

As to quaternary structure, homodimer; disulfide-linked. May form a hexamer composed of 3 homodimers. Interacts with HSP70. (Microbial infection) Binds to the head and beginning of the coiled stalk of N.meningitidis adhesin A (nadA) variant 3; binding can be abrogated by monoclonal antibodies against the specific regions of NadA. Binding occurs in protein microarrays, in solution and when LOX-1 is expressed on the cell surface. Post-translationally, the intrachain disulfide-bonds prevent N-glycosylation at some sites. In terms of processing, N-glycosylated. In terms of tissue distribution, expressed at high level in endothelial cells and vascular-rich organs such as placenta, lung, liver and brain, aortic intima, bone marrow, spinal cord and substantia nigra. Also expressed at the surface of dendritic cells. Widely expressed at intermediate and low level.

The protein localises to the cell membrane. Its subcellular location is the membrane raft. The protein resides in the secreted. Receptor that mediates the recognition, internalization and degradation of oxidatively modified low density lipoprotein (oxLDL) by vascular endothelial cells. OxLDL is a marker of atherosclerosis that induces vascular endothelial cell activation and dysfunction, resulting in pro-inflammatory responses, pro-oxidative conditions and apoptosis. Its association with oxLDL induces the activation of NF-kappa-B through an increased production of intracellular reactive oxygen and a variety of pro-atherogenic cellular responses including a reduction of nitric oxide (NO) release, monocyte adhesion and apoptosis. In addition to binding oxLDL, it acts as a receptor for the HSP70 protein involved in antigen cross-presentation to naive T-cells in dendritic cells, thereby participating in cell-mediated antigen cross-presentation. Also involved in inflammatory process, by acting as a leukocyte-adhesion molecule at the vascular interface in endotoxin-induced inflammation. Also acts as a receptor for advanced glycation end (AGE) products, activated platelets, monocytes, apoptotic cells and both Gram-negative and Gram-positive bacteria. In terms of biological role, (Microbial infection) May serve as a receptor for adhesin A variant 3 (nadA) of N.meningitidis. The chain is Oxidized low-density lipoprotein receptor 1 (OLR1) from Homo sapiens (Human).